The sequence spans 254 residues: Adenosylcobinamide-GDP ribazoletransferase (254 aa).

7 helical membrane-spanning segments follow: residues 29-49 (LFWFPVVGLLLGSIQAALGYF), 50-70 (TSLLGWNELSAAFVVLGGIAL), 98-118 (IMKDPNVGSFGAIALSGMMLL), 121-141 (IAILKLVDIGAFACIAAGVLL), 170-190 (AGVVHIVVTSALTLLFLFPLL), 198-218 (LYAVVAMISAALAAALLTGLL), and 230-250 (VLGAGSEVTELFVWIAAALSA).

This sequence belongs to the CobS family. The cofactor is Mg(2+).

The protein localises to the cell inner membrane. The catalysed reaction is alpha-ribazole + adenosylcob(III)inamide-GDP = adenosylcob(III)alamin + GMP + H(+). It carries out the reaction alpha-ribazole 5'-phosphate + adenosylcob(III)inamide-GDP = adenosylcob(III)alamin 5'-phosphate + GMP + H(+). Its pathway is cofactor biosynthesis; adenosylcobalamin biosynthesis; adenosylcobalamin from cob(II)yrinate a,c-diamide: step 7/7. Functionally, joins adenosylcobinamide-GDP and alpha-ribazole to generate adenosylcobalamin (Ado-cobalamin). Also synthesizes adenosylcobalamin 5'-phosphate from adenosylcobinamide-GDP and alpha-ribazole 5'-phosphate. The sequence is that of Adenosylcobinamide-GDP ribazoletransferase from Pelodictyon phaeoclathratiforme (strain DSM 5477 / BU-1).